We begin with the raw amino-acid sequence, 180 residues long: Inner membrane-spanning protein YciB (180 aa).

The next 6 helical transmembrane spans lie at 4–24 (LLSEIGPVIAFFAGFFYGGGI), 25–45 (QHATLYMLITSVICITLCYVI), 52–72 (LSIISTTVLLVSGSITLISGN), 76–96 (IKIKPTILYVIFGIIFLMSGI), 118–138 (ITLSYRTAAFFFFMAVVNEVV), and 150–170 (FKVFGVIPITVIFILLQLPLL).

It belongs to the YciB family.

It localises to the cell inner membrane. In terms of biological role, plays a role in cell envelope biogenesis, maintenance of cell envelope integrity and membrane homeostasis. The chain is Inner membrane-spanning protein YciB from Rickettsia massiliae (strain Mtu5).